The primary structure comprises 346 residues: Holliday junction branch migration complex subunit RuvB (346 aa).

The segment at 1–181 (MSDRNPLIDA…FGIPVRLNFY (181 aa)) is large ATPase domain (RuvB-L). ATP contacts are provided by residues Leu-20, Arg-21, Gly-62, Lys-65, Thr-66, Thr-67, 128–130 (EDF), Arg-171, Tyr-181, and Arg-218. Thr-66 is a Mg(2+) binding site. Residues 182 to 252 (TVEELEYIVR…IADEALSRLE (71 aa)) are small ATPAse domain (RuvB-S). Positions 255-346 (NRGLDQLDRR…SQYGLFMEDE (92 aa)) are head domain (RuvB-H). DNA contacts are provided by Arg-291, Arg-310, and Arg-315.

The protein belongs to the RuvB family. As to quaternary structure, homohexamer. Forms an RuvA(8)-RuvB(12)-Holliday junction (HJ) complex. HJ DNA is sandwiched between 2 RuvA tetramers; dsDNA enters through RuvA and exits via RuvB. An RuvB hexamer assembles on each DNA strand where it exits the tetramer. Each RuvB hexamer is contacted by two RuvA subunits (via domain III) on 2 adjacent RuvB subunits; this complex drives branch migration. In the full resolvosome a probable DNA-RuvA(4)-RuvB(12)-RuvC(2) complex forms which resolves the HJ.

It is found in the cytoplasm. It catalyses the reaction ATP + H2O = ADP + phosphate + H(+). In terms of biological role, the RuvA-RuvB-RuvC complex processes Holliday junction (HJ) DNA during genetic recombination and DNA repair, while the RuvA-RuvB complex plays an important role in the rescue of blocked DNA replication forks via replication fork reversal (RFR). RuvA specifically binds to HJ cruciform DNA, conferring on it an open structure. The RuvB hexamer acts as an ATP-dependent pump, pulling dsDNA into and through the RuvAB complex. RuvB forms 2 homohexamers on either side of HJ DNA bound by 1 or 2 RuvA tetramers; 4 subunits per hexamer contact DNA at a time. Coordinated motions by a converter formed by DNA-disengaged RuvB subunits stimulates ATP hydrolysis and nucleotide exchange. Immobilization of the converter enables RuvB to convert the ATP-contained energy into a lever motion, pulling 2 nucleotides of DNA out of the RuvA tetramer per ATP hydrolyzed, thus driving DNA branch migration. The RuvB motors rotate together with the DNA substrate, which together with the progressing nucleotide cycle form the mechanistic basis for DNA recombination by continuous HJ branch migration. Branch migration allows RuvC to scan DNA until it finds its consensus sequence, where it cleaves and resolves cruciform DNA. The sequence is that of Holliday junction branch migration complex subunit RuvB from Brucella suis (strain ATCC 23445 / NCTC 10510).